The chain runs to 175 residues: Protein GrpE (175 aa).

This sequence belongs to the GrpE family. In terms of assembly, homodimer.

The protein resides in the cytoplasm. In terms of biological role, participates actively in the response to hyperosmotic and heat shock by preventing the aggregation of stress-denatured proteins, in association with DnaK and GrpE. It is the nucleotide exchange factor for DnaK and may function as a thermosensor. Unfolded proteins bind initially to DnaJ; upon interaction with the DnaJ-bound protein, DnaK hydrolyzes its bound ATP, resulting in the formation of a stable complex. GrpE releases ADP from DnaK; ATP binding to DnaK triggers the release of the substrate protein, thus completing the reaction cycle. Several rounds of ATP-dependent interactions between DnaJ, DnaK and GrpE are required for fully efficient folding. This is Protein GrpE from Thermoplasma acidophilum (strain ATCC 25905 / DSM 1728 / JCM 9062 / NBRC 15155 / AMRC-C165).